The primary structure comprises 1674 residues: Kinesin-like protein KIF14 (1674 aa).

The segment at 1–391 is required for PRC1-binding; it reads MSVHTSHSRH…TEPDSLKVEN (391 aa). 2 disordered regions span residues 132-158 and 171-374; these read ETLN…KGVN and KDSN…PEEN. Composition is skewed to polar residues over residues 142 to 151 and 202 to 214; these read GSDSASQASR and SRAP…QTEA. Ser257 is subject to Phosphoserine. A Phosphothreonine modification is found at Thr262. Residues 267–279 show a composition bias toward basic and acidic residues; it reads VLEHRWTPRHDPP. The segment covering 302 to 311 has biased composition (polar residues); sequence TFRSASSESR. Residues 317 to 329 show a composition bias toward basic and acidic residues; sequence VPEHRWTPRHDLP. Residues 391–772 form a required for microtubule-binding with high affinity region; the sequence is NSQVTVAVRV…AAQRSNRNID (382 aa). Positions 393-736 constitute a Kinesin motor domain; that stretch reads QVTVAVRVRP…LRYATQARLI (344 aa). 482–489 provides a ligand contact to ATP; sequence GQTGSGKS. Residues 743–826 adopt a coiled-coil conformation; sequence NEDMNAKLIR…QETKELQKAG (84 aa). The region spanning 860-911 is the FHA domain; sequence TTVGKHTPSSSHDIQLSGVLIADDHCTIRNFGGTVSIVPAGEAKTYVNGTHI. The segment at 936 to 1674 is required for CIT-binding; sequence PVEVQKGKKL…DCTPNRIQWV (739 aa). The stretch at 961-1110 forms a coiled coil; the sequence is EFAKNELLTA…VQMLQENRGN (150 aa). Phosphoserine is present on residues Ser973 and Ser1326. Positions 1618 to 1674 are disordered; that stretch reads GLSKPWESCSSNSKEEQCKSDRADCGKSGPRRACEPHGDATPAVSSGDCTPNRIQWV. The segment covering 1630 to 1642 has biased composition (basic and acidic residues); sequence SKEEQCKSDRADC. A compositionally biased stretch (polar residues) spans 1660–1674; sequence AVSSGDCTPNRIQWV.

The protein belongs to the TRAFAC class myosin-kinesin ATPase superfamily. Kinesin family. As to quaternary structure, directly interacts with PRC1 within a complex also containing KIF4A, KIF20A and KIF23; targets to the central spindle. Directly interacts with CIT depending on the activation state of the kinase (stronger interaction with the kinase-dead form); targets to the midbody. Interacts with ARRB2; the interaction is detected in the nucleus upon OR1D2 stimulation. Interacts with AKT1; the interaction is detected in the plasma membrane upon INS stimulation and promotes AKT1 phosphorylation. Interacts with SVIL; at midbody during cytokinesis. Interacts with RADIL (via PDZ domain); recruits RADIL to the microtubule network restricting RADIL from interaction with activated RAP1A.

It localises to the nucleus. Its subcellular location is the cytoplasm. The protein localises to the cytoskeleton. It is found in the spindle. The protein resides in the midbody. Microtubule motor protein that binds to microtubules with high affinity through each tubulin heterodimer and has an ATPase activity. Plays a role in many processes like cell division, cytokinesis and also in cell proliferation and apoptosis. During cytokinesis, targets to central spindle and midbody through its interaction with PRC1 and CIT respectively. Regulates cell growth through regulation of cell cycle progression and cytokinesis. During cell cycle progression acts through SCF-dependent proteasomal ubiquitin-dependent protein catabolic process which controls CDKN1B degradation, resulting in positive regulation of cyclins, including CCNE1, CCND1 and CCNB1. During late neurogenesis, regulates the cerebellar and cerebral cortex development and olfactory bulb development through regulation of apoptosis, cell proliferation and cell division. Also is required for chromosome congression and alignment during mitotic cell cycle process. Regulates cell spreading, focal adhesion dynamics, and cell migration through its interaction with RADIL resulting in regulation of RAP1A-mediated inside-out integrin activation by tethering RADIL on microtubules. This is Kinesin-like protein KIF14 from Mus musculus (Mouse).